Reading from the N-terminus, the 317-residue chain is Probable F-box protein At2g36090 (317 aa).

The F-box domain maps to 25 to 74 (IESHILTRLDGATLASVSCASSHLHHLASNEILWSKICRSTWPSCSGGSR).

The sequence is that of Probable F-box protein At2g36090 from Arabidopsis thaliana (Mouse-ear cress).